A 479-amino-acid chain; its full sequence is Aspartyl/glutamyl-tRNA(Asn/Gln) amidotransferase subunit B (479 aa).

Belongs to the GatB/GatE family. GatB subfamily. As to quaternary structure, heterotrimer of A, B and C subunits.

The catalysed reaction is L-glutamyl-tRNA(Gln) + L-glutamine + ATP + H2O = L-glutaminyl-tRNA(Gln) + L-glutamate + ADP + phosphate + H(+). It carries out the reaction L-aspartyl-tRNA(Asn) + L-glutamine + ATP + H2O = L-asparaginyl-tRNA(Asn) + L-glutamate + ADP + phosphate + 2 H(+). Allows the formation of correctly charged Asn-tRNA(Asn) or Gln-tRNA(Gln) through the transamidation of misacylated Asp-tRNA(Asn) or Glu-tRNA(Gln) in organisms which lack either or both of asparaginyl-tRNA or glutaminyl-tRNA synthetases. The reaction takes place in the presence of glutamine and ATP through an activated phospho-Asp-tRNA(Asn) or phospho-Glu-tRNA(Gln). In Streptococcus pyogenes serotype M12 (strain MGAS2096), this protein is Aspartyl/glutamyl-tRNA(Asn/Gln) amidotransferase subunit B.